We begin with the raw amino-acid sequence, 355 residues long: 3-dehydroquinate synthase (355 aa).

Residues 105-109 (GVVGD), 129-130 (TS), K142, K151, and 169-172 (TLKT) each bind NAD(+). E184, H246, and H263 together coordinate Zn(2+).

The protein belongs to the sugar phosphate cyclases superfamily. Dehydroquinate synthase family. Co(2+) serves as cofactor. The cofactor is Zn(2+). Requires NAD(+) as cofactor.

Its subcellular location is the cytoplasm. The catalysed reaction is 7-phospho-2-dehydro-3-deoxy-D-arabino-heptonate = 3-dehydroquinate + phosphate. The protein operates within metabolic intermediate biosynthesis; chorismate biosynthesis; chorismate from D-erythrose 4-phosphate and phosphoenolpyruvate: step 2/7. Its function is as follows. Catalyzes the conversion of 3-deoxy-D-arabino-heptulosonate 7-phosphate (DAHP) to dehydroquinate (DHQ). This chain is 3-dehydroquinate synthase, found in Streptococcus agalactiae serotype Ia (strain ATCC 27591 / A909 / CDC SS700).